The chain runs to 81 residues: MGGLQPWHWVIVIAVFVLLFGAKKLPDAARSLGKSMRIFKSEIKEMQAESKGDEPKPATPIASERVDTTAPEQQSTDRHTA.

Residues 1–21 (MGGLQPWHWVIVIAVFVLLFG) traverse the membrane as a helical segment. Basic and acidic residues predominate over residues 46 to 56 (MQAESKGDEPK). The segment at 46 to 81 (MQAESKGDEPKPATPIASERVDTTAPEQQSTDRHTA) is disordered.

The protein belongs to the TatA/E family. As to quaternary structure, the Tat system comprises two distinct complexes: a TatABC complex, containing multiple copies of TatA, TatB and TatC subunits, and a separate TatA complex, containing only TatA subunits. Substrates initially bind to the TatABC complex, which probably triggers association of the separate TatA complex to form the active translocon.

The protein localises to the cell membrane. Its function is as follows. Part of the twin-arginine translocation (Tat) system that transports large folded proteins containing a characteristic twin-arginine motif in their signal peptide across membranes. TatA could form the protein-conducting channel of the Tat system. In Mycolicibacterium smegmatis (strain ATCC 700084 / mc(2)155) (Mycobacterium smegmatis), this protein is Sec-independent protein translocase protein TatA.